Consider the following 370-residue polypeptide: MSDKLNRPKVFFDISADGKPKGRVVFELYNDVVPKTAENFRALCTGEKGASESSGKQLHYKGSIFHRIIKDFMCQGGDFTHGSGIGGESIYGEKFEDENFQLTHDKPFLLSMANAGANTNGSQFFITTVPTPHLNGKHVVFGEVIQGKSIVRQLERCDKGENDKPVEDWIISDCGELPSDYVPVPTSVDDGTGDIYEEVMADDDNINVNDPESVFKAVTTLKDIGTKQLKDGNVAAAYEKYNKASGFLNDYFPEDLSEENLSKLHALKLSCYLNAALVALKLKDGKKTINAASNALEVEAIDDKSKTKALYRKGMGYLLAKDEESAQKSLEEALQLSPEDGAIIKGLQDVKTTIKARRDKQKKAMSKFFS.

Residues 11–176 enclose the PPIase cyclophilin-type domain; that stretch reads FFDISADGKP…EDWIISDCGE (166 aa). TPR repeat units lie at residues 218–251, 269–302, and 307–340; these read VTTL…LNDY, LSCY…EAID, and TKAL…SPED.

It belongs to the cyclophilin-type PPIase family. PPIase D subfamily.

It is found in the cytoplasm. It catalyses the reaction [protein]-peptidylproline (omega=180) = [protein]-peptidylproline (omega=0). PPIases accelerate the folding of proteins. It catalyzes the cis-trans isomerization of proline imidic peptide bonds in oligopeptides. The protein is Peptidyl-prolyl cis-trans isomerase D (CPR6) of Debaryomyces hansenii (strain ATCC 36239 / CBS 767 / BCRC 21394 / JCM 1990 / NBRC 0083 / IGC 2968) (Yeast).